The primary structure comprises 730 residues: MQEKGKCPVTGMTKHKTSGGTTNQDWWPNQLNLKMLHQNPTMRNPMGERFNYAEEFKKLDFEALKNDLYALMTDSQEWWPADYGHYGPLFIRMAWHSAGTYRMGDGRGGAGTGNQRFAPLNSWPDNVNLDKARRLLWPIKQKYGKKISWADLMILAGNCALESMGFKTFGFAGGREDIWEPEEDIYWGQENEWLGDKRYSGDRELENPLAAVQMGLIYVNPEGPNGQPSALASGKDIRDTFARMAMNDEETVALVAGGHTFGKCHGAGSATHVGPEPEAANIEEQGLGWKNSMGSGKGIHTISSGIEGAWTPTPIKWDNSYLDTLFNYDWDLVKSPAGAWQWVPTDPTAADSVPDAHDPSKRHAPMMTTADLALRMDPIYGPIAKGFRENPEAFADAFGRAWFKLTHRDMGPRTRFLGPEVPTEELIWQDPVPAVDFELIDEDDITGLKGKIIDSGLSLSELVSTAWASASSFRGSDKRGGANGARIRLAPQKDWEVNQPEQLQTVLQALEKIQDTFNSAQSGKKRISLADLIVLAGCAGVEQAAKNAGFDVCVPFTPGRTDASQEQTEVESFSVLEPMADGFRNYSKGKYTISAEKLLVDRTQLLGLTAPEMTVLVGGMRVLNANYNKSQQGVLTKRPENLTNDFFVNLLDMDTAWKVTAEGGDMFEGIDRKTGELKWTGTGVDLVFGSNSELRAIAEVYASDDAKQKFVEDFVTAWNKVMNADRFDLA.

A disordered region spans residues 1 to 24 (MQEKGKCPVTGMTKHKTSGGTTNQ). Residues 95–218 (WHSAGTYRMG…LAAVQMGLIY (124 aa)) constitute a cross-link (tryptophyl-tyrosyl-methioninium (Trp-Tyr) (with M-244)). Residue His-96 is the Proton acceptor of the active site. Residues 218–244 (YVNPEGPNGQPSALASGKDIRDTFARM) constitute a cross-link (tryptophyl-tyrosyl-methioninium (Tyr-Met) (with W-95)). His-259 lines the heme b pocket.

It belongs to the peroxidase family. Peroxidase/catalase subfamily. In terms of assembly, homodimer or homotetramer. Requires heme b as cofactor. In terms of processing, formation of the three residue Trp-Tyr-Met cross-link is important for the catalase, but not the peroxidase activity of the enzyme.

The enzyme catalyses H2O2 + AH2 = A + 2 H2O. It catalyses the reaction 2 H2O2 = O2 + 2 H2O. Its function is as follows. Bifunctional enzyme with both catalase and broad-spectrum peroxidase activity. The sequence is that of Catalase-peroxidase 1 from Alkaliphilus metalliredigens (strain QYMF).